We begin with the raw amino-acid sequence, 571 residues long: Urease subunit alpha (571 aa).

Residues 133-571 form the Urease domain; the sequence is GGIDTHVHFI…LPLTQRYFLF (439 aa). The Ni(2+) site is built by His138, His140, and Lys221. Lys221 is subject to N6-carboxylysine. His223 is a substrate binding site. 2 residues coordinate Ni(2+): His250 and His276. The Proton donor role is filled by His324. Residue Asp364 coordinates Ni(2+).

It belongs to the metallo-dependent hydrolases superfamily. Urease alpha subunit family. As to quaternary structure, heterotrimer of UreA (gamma), UreB (beta) and UreC (alpha) subunits. Three heterotrimers associate to form the active enzyme. Ni cation serves as cofactor. In terms of processing, carboxylation allows a single lysine to coordinate two nickel ions.

It is found in the cytoplasm. The enzyme catalyses urea + 2 H2O + H(+) = hydrogencarbonate + 2 NH4(+). It participates in nitrogen metabolism; urea degradation; CO(2) and NH(3) from urea (urease route): step 1/1. In Staphylococcus epidermidis (strain ATCC 35984 / DSM 28319 / BCRC 17069 / CCUG 31568 / BM 3577 / RP62A), this protein is Urease subunit alpha.